The sequence spans 215 residues: MNEEGGYLGAMTYQCLYSPVMEKIKQQHRDDPRASLALNKLHTALTTCEQASPSFLYDFTKVLLDDSELSVNLQESYLRMHDTSPTNDLIVSGYEQNADYKELTKRAIELRRVLSRVPEEMSDRHAFLETIKLIASSIKKLLEAINAVYRIVPLTAQPAVEKRKREFVHYSKRFSNTLKTYFKDQNANQVSVSANQLVFQTTMIVRTINEKLRRG.

Belongs to the PDCD10 family. In terms of assembly, interacts with gck-1. In terms of tissue distribution, expressed in pharynx, intestine, germline, vulva and excretory canals.

It localises to the cytoplasm. Its subcellular location is the apical cell membrane. Its function is as follows. Involved in excretory canal elongation during postembryonic development. Plays a role in promoting Golgi stability, ER integrity and vesicle transport probably by regulating the activation of Rho GTPase cdc-42. Involved in fertility. The polypeptide is Programmed cell death protein 10 homolog (Caenorhabditis elegans).